A 159-amino-acid polypeptide reads, in one-letter code: Ribosomal RNA large subunit methyltransferase H (159 aa).

Residues leucine 76, glycine 108, and 127 to 132 each bind S-adenosyl-L-methionine; that span reads FGRLTL.

The protein belongs to the RNA methyltransferase RlmH family. As to quaternary structure, homodimer.

It is found in the cytoplasm. The enzyme catalyses pseudouridine(1915) in 23S rRNA + S-adenosyl-L-methionine = N(3)-methylpseudouridine(1915) in 23S rRNA + S-adenosyl-L-homocysteine + H(+). Its function is as follows. Specifically methylates the pseudouridine at position 1915 (m3Psi1915) in 23S rRNA. This chain is Ribosomal RNA large subunit methyltransferase H, found in Listeria monocytogenes serotype 4a (strain HCC23).